We begin with the raw amino-acid sequence, 271 residues long: Imidazole glycerol phosphate synthase subunit HisF (271 aa).

Active-site residues include Asp12 and Asp131.

Belongs to the HisA/HisF family. Heterodimer of HisH and HisF.

Its subcellular location is the cytoplasm. It carries out the reaction 5-[(5-phospho-1-deoxy-D-ribulos-1-ylimino)methylamino]-1-(5-phospho-beta-D-ribosyl)imidazole-4-carboxamide + L-glutamine = D-erythro-1-(imidazol-4-yl)glycerol 3-phosphate + 5-amino-1-(5-phospho-beta-D-ribosyl)imidazole-4-carboxamide + L-glutamate + H(+). It participates in amino-acid biosynthesis; L-histidine biosynthesis; L-histidine from 5-phospho-alpha-D-ribose 1-diphosphate: step 5/9. In terms of biological role, IGPS catalyzes the conversion of PRFAR and glutamine to IGP, AICAR and glutamate. The HisF subunit catalyzes the cyclization activity that produces IGP and AICAR from PRFAR using the ammonia provided by the HisH subunit. This chain is Imidazole glycerol phosphate synthase subunit HisF, found in Methanospirillum hungatei JF-1 (strain ATCC 27890 / DSM 864 / NBRC 100397 / JF-1).